Reading from the N-terminus, the 318-residue chain is Cell surface sensor SHO1 (318 aa).

Positions 1 to 23 (MPSYGSLHSPSLRKMEHSRGQYG) are disordered. Topologically, residues 1–38 (MPSYGSLHSPSLRKMEHSRGQYGGGRKGMSLGNVIGDP) are cytoplasmic. A helical transmembrane segment spans residues 39 to 59 (FALATISIAGLAWLIAFIASI). At 60-71 (VAQIQTTQGFPT) the chain is on the extracellular side. The chain crosses the membrane as a helical span at residues 72-92 (YTWWTVVFYFFLIPGVFVVVA). Topologically, residues 93–100 (SDTIQTYH) are cytoplasmic. Residues 101–121 (VALVGYMACGLVLTTSSVNGL) traverse the membrane as a helical segment. Residues 122–130 (VYSTNGAKE) lie on the Extracellular side of the membrane. The chain crosses the membrane as a helical span at residues 131–151 (AAAAGFILLSMVTIVWIFYFG). Residues 152 to 318 (SAPSAMPRAY…IAPSNYLILL (167 aa)) are Cytoplasmic-facing. The segment at 172–255 (TSNNRQTMTG…AGGAADAEIV (84 aa)) is disordered. Over residues 190-214 (ETSTSVQPPQMYTSAQLNGFENPSP) the composition is skewed to polar residues. Low complexity predominate over residues 237-250 (GLPKTTTPPAGGAA). The region spanning 259-318 (EYPYRAKAIYTYEANPDDANEISFSKHEILEVSDVSGRWWQARKETGETGIAPSNYLILL) is the SH3 domain.

This sequence belongs to the SHO1 family. As to quaternary structure, forms homooligomers.

The protein resides in the cell membrane. Functionally, MSB2 and SHO1 have overlapping functions in recognizing various surface signals for MAPK PMK1 activation and appressorium formation. While MSB2 is critical for sensing surface hydrophobicity and cutin monomers, SHO1 may play a more important role in recognizing rice leaf waxes. The chain is Cell surface sensor SHO1 from Pyricularia oryzae (strain 70-15 / ATCC MYA-4617 / FGSC 8958) (Rice blast fungus).